Reading from the N-terminus, the 685-residue chain is Methionine--tRNA ligase (685 aa).

The 'HIGH' region signature appears at Pro15–His25. 4 residues coordinate Zn(2+): Cys146, Cys149, Cys159, and Cys162. The short motif at Lys331 to Ser335 is the 'KMSKS' region element. Lys334 is a binding site for ATP. Residues Asp583 to Lys685 enclose the tRNA-binding domain.

Belongs to the class-I aminoacyl-tRNA synthetase family. MetG type 1 subfamily. In terms of assembly, homodimer. Zn(2+) serves as cofactor.

It is found in the cytoplasm. The enzyme catalyses tRNA(Met) + L-methionine + ATP = L-methionyl-tRNA(Met) + AMP + diphosphate. Is required not only for elongation of protein synthesis but also for the initiation of all mRNA translation through initiator tRNA(fMet) aminoacylation. The protein is Methionine--tRNA ligase of Actinobacillus succinogenes (strain ATCC 55618 / DSM 22257 / CCUG 43843 / 130Z).